We begin with the raw amino-acid sequence, 329 residues long: Major outer membrane protein P.IB (329 aa).

The signal sequence occupies residues 1 to 19 (MKKSLIALTLAALPVAAMA).

This sequence belongs to the Gram-negative porin family. In terms of assembly, homotrimer.

It localises to the cell outer membrane. Functionally, serves as a slightly cation selective porin. In Neisseria meningitidis serogroup A / serotype 4A (strain DSM 15465 / Z2491), this protein is Major outer membrane protein P.IB (porB).